The chain runs to 558 residues: Glutamine--tRNA ligase (558 aa).

A 'HIGH' region motif is present at residues 36-46 (PEPNGYLHIGH). Residues 37–39 (EPN) and 43–49 (HIGHAKS) contribute to the ATP site. L-glutamine-binding residues include Asp-69 and Tyr-214. ATP is bound by residues Thr-233, 263-264 (RL), and 271-273 (LSK). The 'KMSKS' region signature appears at 270–274 (LLSKR).

The protein belongs to the class-I aminoacyl-tRNA synthetase family. As to quaternary structure, monomer.

Its subcellular location is the cytoplasm. It catalyses the reaction tRNA(Gln) + L-glutamine + ATP = L-glutaminyl-tRNA(Gln) + AMP + diphosphate. In Bradyrhizobium diazoefficiens (strain JCM 10833 / BCRC 13528 / IAM 13628 / NBRC 14792 / USDA 110), this protein is Glutamine--tRNA ligase.